The primary structure comprises 440 residues: Chromosomal replication initiator protein DnaA (440 aa).

A domain I, interacts with DnaA modulators region spans residues 1–69 (MKERILQEIK…VKVVLGNDAT (69 aa)). Residues 69–96 (TFEITYEAFEPHSSYSEPLVKKRAVLLT) form a domain II region. Residues 97–313 (PLNPDYTFEN…GAIIKLLVYK (217 aa)) are domain III, AAA+ region. ADP is bound by residues V108, N113, G140, L141, G142, K143, T144, H145, and R300. G140 contributes to the ATP binding site. ATP contacts are provided by G142, K143, and T144. T144 serves as a coordination point for Mg(2+). Positions 314 to 440 (ETTGKEVDLK…GEISRRALSG (127 aa)) are domain IV, binds dsDNA.

It belongs to the DnaA family. As to quaternary structure, oligomerizes as a right-handed, spiral filament on DNA at oriC.

The protein localises to the cytoplasm. Its function is as follows. Plays an essential role in the initiation and regulation of chromosomal replication. ATP-DnaA binds to the origin of replication (oriC) to initiate formation of the DNA replication initiation complex once per cell cycle. Binds the DnaA box (a 9 base pair repeat at the origin) and separates the double-stranded (ds)DNA. Forms a right-handed helical filament on oriC DNA; dsDNA binds to the exterior of the filament while single-stranded (ss)DNA is stabiized in the filament's interior. The ATP-DnaA-oriC complex binds and stabilizes one strand of the AT-rich DNA unwinding element (DUE), permitting loading of DNA polymerase. After initiation quickly degrades to an ADP-DnaA complex that is not apt for DNA replication. Binds acidic phospholipids. The DnaA box consensus is 5'-[ATC][AT]AC[CT]TACCA[CT][CTA]-3' in this bacterium. Mutagenesis of residues that line the central pore blocks dsDNA separation. This is Chromosomal replication initiator protein DnaA from Thermotoga maritima (strain ATCC 43589 / DSM 3109 / JCM 10099 / NBRC 100826 / MSB8).